The sequence spans 162 residues: Transcription elongation factor GreA (162 aa).

Positions 45–74 form a coiled coil; the sequence is ENAEYEAAREKQAFIEGRIKELEDMTARAE.

It belongs to the GreA/GreB family.

Its function is as follows. Necessary for efficient RNA polymerase transcription elongation past template-encoded arresting sites. The arresting sites in DNA have the property of trapping a certain fraction of elongating RNA polymerases that pass through, resulting in locked ternary complexes. Cleavage of the nascent transcript by cleavage factors such as GreA or GreB allows the resumption of elongation from the new 3'terminus. GreA releases sequences of 2 to 3 nucleotides. In Rickettsia conorii (strain ATCC VR-613 / Malish 7), this protein is Transcription elongation factor GreA.